Here is a 576-residue protein sequence, read N- to C-terminus: Vacuolar protein sorting-associated protein vps5 (576 aa).

Disordered stretches follow at residues Met1 to Arg60 and Asp156 to Ser198. A Phosphothreonine modification is found at Thr55. The segment covering Asp156–Val169 has biased composition (polar residues). Residues Ser170–Ser181 show a composition bias toward low complexity. The region spanning Thr200–Asp317 is the PX domain. The a 1,2-diacyl-sn-glycero-3-phospho-(1D-myo-inositol-3-phosphate) site is built by Arg244, Lys270, and Arg284. Ser332 carries the phosphoserine modification.

The protein belongs to the sorting nexin family. As to quaternary structure, component of the retromer complex which consists of vps29, vps26, vps35, vps5 and vps17.

The protein localises to the cytoplasm. It localises to the golgi apparatus. It is found in the membrane. In terms of biological role, required for efficient sporulation target of PtdIns(3)P in vesicle transport required for onset of the forespore membrane formation. Functionally, plays a role in vesicular protein sorting. Required for the endosome-to-Golgi retrieval of the vacuolar protein sorting receptor pep1/vps10. Component of the membrane-associated retromer complex which is essential in endosome-to-Golgi retrograde transport. The vps29-vps26-vps35 subcomplex may be involved in cargo selection. This is Vacuolar protein sorting-associated protein vps5 (vps5) from Schizosaccharomyces pombe (strain 972 / ATCC 24843) (Fission yeast).